We begin with the raw amino-acid sequence, 371 residues long: Glutamate 5-kinase (371 aa).

Residue lysine 10 participates in ATP binding. 3 residues coordinate substrate: serine 50, aspartate 137, and asparagine 149. ATP is bound by residues 169-170 and 208-214; these read SD and TGGMYTK. Residues 274-352 form the PUA domain; it reads QGKVYIDDGA…EEIKNILGED (79 aa).

Belongs to the glutamate 5-kinase family.

The protein resides in the cytoplasm. The enzyme catalyses L-glutamate + ATP = L-glutamyl 5-phosphate + ADP. It participates in amino-acid biosynthesis; L-proline biosynthesis; L-glutamate 5-semialdehyde from L-glutamate: step 1/2. Functionally, catalyzes the transfer of a phosphate group to glutamate to form L-glutamate 5-phosphate. The protein is Glutamate 5-kinase of Dictyoglomus thermophilum (strain ATCC 35947 / DSM 3960 / H-6-12).